We begin with the raw amino-acid sequence, 130 residues long: Small ribosomal subunit protein uS9 (130 aa).

It belongs to the universal ribosomal protein uS9 family.

The sequence is that of Small ribosomal subunit protein uS9 from Pasteurella multocida (strain Pm70).